We begin with the raw amino-acid sequence, 474 residues long: PRAME family member 10 (474 aa).

Residues arginine 97–cysteine 124 form an LRR 1; degenerate repeat. One copy of the LRR 2; degenerate repeat lies at histidine 179 to tyrosine 203. Residues proline 204 to glutamine 230 form an LRR 3; degenerate repeat. An LRR 4; degenerate repeat occupies methionine 231–cysteine 265. LRR repeat units lie at residues leucine 266–leucine 291, lysine 292–lysine 323, glutamate 324–valine 342, alanine 348–histidine 375, and cysteine 376–histidine 400.

It belongs to the PRAME family.

The sequence is that of PRAME family member 10 from Homo sapiens (Human).